Reading from the N-terminus, the 886-residue chain is Alanine--tRNA ligase (886 aa).

Zn(2+) is bound by residues His564, His568, Cys666, and His670.

This sequence belongs to the class-II aminoacyl-tRNA synthetase family. The cofactor is Zn(2+).

The protein localises to the cytoplasm. It carries out the reaction tRNA(Ala) + L-alanine + ATP = L-alanyl-tRNA(Ala) + AMP + diphosphate. In terms of biological role, catalyzes the attachment of alanine to tRNA(Ala) in a two-step reaction: alanine is first activated by ATP to form Ala-AMP and then transferred to the acceptor end of tRNA(Ala). Also edits incorrectly charged Ser-tRNA(Ala) and Gly-tRNA(Ala) via its editing domain. This Prochlorococcus marinus (strain MIT 9515) protein is Alanine--tRNA ligase.